A 356-amino-acid chain; its full sequence is Ferrochelatase (356 aa).

His-214 and Glu-295 together coordinate Fe cation.

This sequence belongs to the ferrochelatase family.

The protein resides in the cytoplasm. It catalyses the reaction heme b + 2 H(+) = protoporphyrin IX + Fe(2+). The protein operates within porphyrin-containing compound metabolism; protoheme biosynthesis; protoheme from protoporphyrin-IX: step 1/1. Catalyzes the ferrous insertion into protoporphyrin IX. This Paraburkholderia phytofirmans (strain DSM 17436 / LMG 22146 / PsJN) (Burkholderia phytofirmans) protein is Ferrochelatase.